A 101-amino-acid chain; its full sequence is Putative pterin-4-alpha-carbinolamine dehydratase (101 aa).

It belongs to the pterin-4-alpha-carbinolamine dehydratase family.

The catalysed reaction is (4aS,6R)-4a-hydroxy-L-erythro-5,6,7,8-tetrahydrobiopterin = (6R)-L-erythro-6,7-dihydrobiopterin + H2O. The sequence is that of Putative pterin-4-alpha-carbinolamine dehydratase from Rhodopseudomonas palustris (strain BisA53).